Consider the following 262-residue polypeptide: MDHNKLYQLLIDDKFFDVVVELTDEEDVLSINAHKIILCASCEYFEKLFTLFREKNQSKITIKVPNRYVVRDIIIGFYKKNIQPCINNWKYQLDLVVCRDFLGLKINSDMIKNVIVPLEGFELLIKVIDLIGFFDETIGIIIRNIPKDYDKSILSDELLDKITNRTEVLNKNMSETESTIQFIVNSSKYQYIKLEMSHKIKYIQEFLEFMCKYDVWDNKDKFLLTVKPIDYKCPCPTKYSDVSFMIKFFTIYLEAKKVNLTN.

Residues 16 to 86 (FDVVVELTDE…FYKKNIQPCI (71 aa)) form the BTB domain.

This sequence belongs to the mimivirus BTB/WD family.

This Acanthamoeba polyphaga (Amoeba) protein is Putative BTB/POZ domain-containing protein L834.